Reading from the N-terminus, the 199-residue chain is Holliday junction branch migration complex subunit RuvA (199 aa).

Positions Met1–Arg64 are domain I. The segment at Thr65–Asp143 is domain II. Positions Val144–Asp148 are flexible linker. Residues Ala149 to Lys199 are domain III.

The protein belongs to the RuvA family. Homotetramer. Forms an RuvA(8)-RuvB(12)-Holliday junction (HJ) complex. HJ DNA is sandwiched between 2 RuvA tetramers; dsDNA enters through RuvA and exits via RuvB. An RuvB hexamer assembles on each DNA strand where it exits the tetramer. Each RuvB hexamer is contacted by two RuvA subunits (via domain III) on 2 adjacent RuvB subunits; this complex drives branch migration. In the full resolvosome a probable DNA-RuvA(4)-RuvB(12)-RuvC(2) complex forms which resolves the HJ.

The protein resides in the cytoplasm. In terms of biological role, the RuvA-RuvB-RuvC complex processes Holliday junction (HJ) DNA during genetic recombination and DNA repair, while the RuvA-RuvB complex plays an important role in the rescue of blocked DNA replication forks via replication fork reversal (RFR). RuvA specifically binds to HJ cruciform DNA, conferring on it an open structure. The RuvB hexamer acts as an ATP-dependent pump, pulling dsDNA into and through the RuvAB complex. HJ branch migration allows RuvC to scan DNA until it finds its consensus sequence, where it cleaves and resolves the cruciform DNA. This chain is Holliday junction branch migration complex subunit RuvA, found in Geotalea daltonii (strain DSM 22248 / JCM 15807 / FRC-32) (Geobacter daltonii).